A 308-amino-acid chain; its full sequence is Porphobilinogen deaminase (308 aa).

S-(dipyrrolylmethanemethyl)cysteine is present on cysteine 240.

This sequence belongs to the HMBS family. As to quaternary structure, monomer. Dipyrromethane is required as a cofactor.

It carries out the reaction 4 porphobilinogen + H2O = hydroxymethylbilane + 4 NH4(+). Its pathway is porphyrin-containing compound metabolism; protoporphyrin-IX biosynthesis; coproporphyrinogen-III from 5-aminolevulinate: step 2/4. Functionally, tetrapolymerization of the monopyrrole PBG into the hydroxymethylbilane pre-uroporphyrinogen in several discrete steps. In Laribacter hongkongensis (strain HLHK9), this protein is Porphobilinogen deaminase.